A 525-amino-acid polypeptide reads, in one-letter code: GMP synthase [glutamine-hydrolyzing] (525 aa).

One can recognise a Glutamine amidotransferase type-1 domain in the interval 9 to 207 (RILILDFGSQ…VRDICQCEAL (199 aa)). The active-site Nucleophile is cysteine 86. Residues histidine 181 and glutamate 183 contribute to the active site. The 193-residue stretch at 208 to 400 (WTPAKIIDDA…LGLPYDMLYR (193 aa)) folds into the GMPS ATP-PPase domain. 235–241 (SGGVDSS) is a binding site for ATP.

In terms of assembly, homodimer.

The enzyme catalyses XMP + L-glutamine + ATP + H2O = GMP + L-glutamate + AMP + diphosphate + 2 H(+). It functions in the pathway purine metabolism; GMP biosynthesis; GMP from XMP (L-Gln route): step 1/1. In terms of biological role, catalyzes the synthesis of GMP from XMP. The protein is GMP synthase [glutamine-hydrolyzing] of Salmonella typhi.